The following is a 196-amino-acid chain: Large ribosomal subunit protein eL15 (196 aa).

Residues 162–196 (RGLTNAGRSNRGLQNRGKGAEHTRPSAGSGSRRGK) form a disordered region.

Belongs to the eukaryotic ribosomal protein eL15 family.

In Haloquadratum walsbyi (strain DSM 16790 / HBSQ001), this protein is Large ribosomal subunit protein eL15.